Reading from the N-terminus, the 440-residue chain is tRNA-2-methylthio-N(6)-dimethylallyladenosine synthase (440 aa).

The region spanning 7 to 123 is the MTTase N-terminal domain; the sequence is NTFYIHTFGC…LPQLIEQARS (117 aa). [4Fe-4S] cluster-binding residues include cysteine 16, cysteine 52, cysteine 86, cysteine 159, cysteine 163, and cysteine 166. Positions 145 to 375 constitute a Radical SAM core domain; it reads RQGSISAFVP…IDLQNTISGE (231 aa). Residues 378–440 enclose the TRAM domain; the sequence is QQAIGSVVEV…TSATLTGRPV (63 aa).

Belongs to the methylthiotransferase family. MiaB subfamily. In terms of assembly, monomer. [4Fe-4S] cluster serves as cofactor.

It localises to the cytoplasm. It catalyses the reaction N(6)-dimethylallyladenosine(37) in tRNA + (sulfur carrier)-SH + AH2 + 2 S-adenosyl-L-methionine = 2-methylsulfanyl-N(6)-dimethylallyladenosine(37) in tRNA + (sulfur carrier)-H + 5'-deoxyadenosine + L-methionine + A + S-adenosyl-L-homocysteine + 2 H(+). Catalyzes the methylthiolation of N6-(dimethylallyl)adenosine (i(6)A), leading to the formation of 2-methylthio-N6-(dimethylallyl)adenosine (ms(2)i(6)A) at position 37 in tRNAs that read codons beginning with uridine. The protein is tRNA-2-methylthio-N(6)-dimethylallyladenosine synthase of Pelodictyon phaeoclathratiforme (strain DSM 5477 / BU-1).